The primary structure comprises 138 residues: Cellular retinoic acid-binding protein 2 (138 aa).

Positions 21 to 31 (KALGVNMMMRK) match the Nuclear localization signal motif. A Glycyl lysine isopeptide (Lys-Gly) (interchain with G-Cter in SUMO) cross-link involves residue Lys-102. Residue 133–135 (RVY) coordinates all-trans-retinoate.

The protein belongs to the calycin superfamily. Fatty-acid binding protein (FABP) family. Interacts with importin alpha. Interacts with RXR and RARA. Sumoylated in response to retinoic acid binding, sumoylation is critical for dissociation from ER and subsequent nuclear translocation. In terms of tissue distribution, embryo and skin of adult mouse.

It localises to the cytoplasm. Its subcellular location is the endoplasmic reticulum. The protein resides in the nucleus. In terms of biological role, transports retinoic acid to the nucleus. Regulates the access of retinoic acid to the nuclear retinoic acid receptors. This is Cellular retinoic acid-binding protein 2 (Crabp2) from Mus musculus (Mouse).